A 778-amino-acid polypeptide reads, in one-letter code: Ribonucleoside-diphosphate reductase large subunit (778 aa).

Residues Ser177, 192–193, Gly221, 419–423, and 613–617 each bind substrate; these read SC, NLCIE, and PTATS. The cysteines at positions 193 and 439 are disulfide-linked. The Proton acceptor role is filled by Asn419. Cys421 serves as the catalytic Cysteine radical intermediate. The Proton acceptor role is filled by Glu423.

Belongs to the ribonucleoside diphosphate reductase large chain family. Heterotetramer composed of a homodimer of the large subunit (R1) and a homodimer of the small subunit (R2). Larger multisubunit protein complex are also active, composed of (R1)n(R2)n.

It catalyses the reaction a 2'-deoxyribonucleoside 5'-diphosphate + [thioredoxin]-disulfide + H2O = a ribonucleoside 5'-diphosphate + [thioredoxin]-dithiol. With respect to regulation, under complex allosteric control mediated by deoxynucleoside triphosphates and ATP binding. The type of nucleotide bound at the specificity site determines substrate preference. It seems probable that ATP makes the enzyme reduce CDP and UDP, dGTP favors ADP reduction and dTTP favors GDP reduction. Its function is as follows. Ribonucleoside-diphosphate reductase holoenzyme provides the precursors necessary for viral DNA synthesis. Allows virus growth in non-dividing cells. Catalyzes the biosynthesis of deoxyribonucleotides from the corresponding ribonucleotides. The polypeptide is Ribonucleoside-diphosphate reductase large subunit (Ornithodoros (relapsing fever ticks)).